Reading from the N-terminus, the 883-residue chain is Phosphoenolpyruvate carboxylase (883 aa).

Catalysis depends on residues His-138 and Lys-546.

Belongs to the PEPCase type 1 family. Requires Mg(2+) as cofactor.

It catalyses the reaction oxaloacetate + phosphate = phosphoenolpyruvate + hydrogencarbonate. In terms of biological role, forms oxaloacetate, a four-carbon dicarboxylic acid source for the tricarboxylic acid cycle. This chain is Phosphoenolpyruvate carboxylase, found in Salmonella dublin (strain CT_02021853).